A 351-amino-acid chain; its full sequence is MTLSIVKSEDSSSRPSAVPSDLPLEEDIINTLPSGVFVQDRYKAWMTVIINVVMVGLGWLGIAIAPWFLLPVVWVFTGTALTGFFVIGHDCGHRSFSRNVWVNDWVGHILFLPIIYPFHSWRIGHNQHHKYTNRMELDNAWQPWRKEEYQNAGKFMQVTYDLFRGRAWWIGSILHWASIHFDWTKFEGKQRQQVKFSSLLVIGAAAIAFPTMILTIGVWGFVKFWVIPWLVFHFWMSTFTLLHHTIADIPFREPEQWHEAESQLSGTVHCNYSRWGEFLCHDINVHIPHHVTTAIPWYNLRTPTPVYRKIGGEYLYPECDFSWGLMKQVVDHAICMMRITIISQSLTTKRV.

The segment at 1 to 20 (MTLSIVKSEDSSSRPSAVPS) is disordered. A run of 2 helical transmembrane segments spans residues 44–62 (AWMT…WLGI) and 68–88 (FLLP…FVIG). Positions 89-93 (HDCGH) match the Histidine box-1 motif. The chain crosses the membrane as a helical span at residues 100–120 (VWVNDWVGHILFLPIIYPFHS). A Histidine box-2 motif is present at residues 125–129 (HNQHH). The next 2 membrane-spanning stretches (helical) occupy residues 199–219 (LLVI…IGVW) and 221–241 (FVKF…TFTL). Positions 289-293 (HHVTT) match the Histidine box-3 motif.

It belongs to the fatty acid desaturase type 2 family. Fe(2+) serves as cofactor.

Its subcellular location is the cellular thylakoid membrane. It carries out the reaction a 1-[(9Z)-octadecenoyl]-2-acyl-glycerolipid + 2 reduced [2Fe-2S]-[ferredoxin] + O2 + 2 H(+) = a 1-[(9Z,12Z)-octadecdienoyl]-2-acyl-glycerolipid + 2 oxidized [2Fe-2S]-[ferredoxin] + 2 H2O. It functions in the pathway lipid metabolism; polyunsaturated fatty acid biosynthesis. Functionally, desaturase involved in fatty acid biosynthesis. Introduces a double bond at carbon 12 of oleoyl groups (18:1) attached to the sn-1 position of the glycerol moiety of membrane glycerolipids. The sequence is that of sn-1 oleoyl-lipid 12-desaturase from Arthrospira platensis (Spirulina platensis).